Here is a 140-residue protein sequence, read N- to C-terminus: Nucleoside diphosphate kinase (140 aa).

ATP is bound by residues lysine 11, phenylalanine 59, arginine 87, threonine 93, arginine 104, and asparagine 114. Catalysis depends on histidine 117, which acts as the Pros-phosphohistidine intermediate.

The protein belongs to the NDK family. As to quaternary structure, homotetramer. The cofactor is Mg(2+).

It is found in the cytoplasm. It catalyses the reaction a 2'-deoxyribonucleoside 5'-diphosphate + ATP = a 2'-deoxyribonucleoside 5'-triphosphate + ADP. It carries out the reaction a ribonucleoside 5'-diphosphate + ATP = a ribonucleoside 5'-triphosphate + ADP. In terms of biological role, major role in the synthesis of nucleoside triphosphates other than ATP. The ATP gamma phosphate is transferred to the NDP beta phosphate via a ping-pong mechanism, using a phosphorylated active-site intermediate. This Agrobacterium fabrum (strain C58 / ATCC 33970) (Agrobacterium tumefaciens (strain C58)) protein is Nucleoside diphosphate kinase.